The chain runs to 147 residues: Large ribosomal subunit protein uL13 (147 aa).

The protein belongs to the universal ribosomal protein uL13 family. In terms of assembly, part of the 50S ribosomal subunit.

Its function is as follows. This protein is one of the early assembly proteins of the 50S ribosomal subunit, although it is not seen to bind rRNA by itself. It is important during the early stages of 50S assembly. This chain is Large ribosomal subunit protein uL13, found in Mycolicibacterium paratuberculosis (strain ATCC BAA-968 / K-10) (Mycobacterium paratuberculosis).